A 170-amino-acid chain; its full sequence is Adenine phosphoribosyltransferase (170 aa).

The protein belongs to the purine/pyrimidine phosphoribosyltransferase family. As to quaternary structure, homodimer.

It is found in the cytoplasm. It carries out the reaction AMP + diphosphate = 5-phospho-alpha-D-ribose 1-diphosphate + adenine. Its pathway is purine metabolism; AMP biosynthesis via salvage pathway; AMP from adenine: step 1/1. Functionally, catalyzes a salvage reaction resulting in the formation of AMP, that is energically less costly than de novo synthesis. The chain is Adenine phosphoribosyltransferase from Streptococcus pneumoniae (strain Hungary19A-6).